A 586-amino-acid polypeptide reads, in one-letter code: Putative ABC transporter ATP-binding protein MG187 homolog (586 aa).

An ABC transporter domain is found at 13–464 (IEFKNIVVDF…PANEFVATFL (452 aa)). 45–52 (GPSGCGKT) contacts ATP.

This sequence belongs to the ABC transporter superfamily.

In Mycoplasma pneumoniae (strain ATCC 29342 / M129 / Subtype 1) (Mycoplasmoides pneumoniae), this protein is Putative ABC transporter ATP-binding protein MG187 homolog.